We begin with the raw amino-acid sequence, 207 residues long: Small ribosomal subunit protein uS4 (207 aa).

The tract at residues 26–47 (AINNKNYKPGQQGNSSSISKPS) is disordered. Residues 28–39 (NNKNYKPGQQGN) are compositionally biased toward polar residues. The region spanning 95–158 (RRLDAVVYRL…KQIPIVIGAI (64 aa)) is the S4 RNA-binding domain.

It belongs to the universal ribosomal protein uS4 family. Part of the 30S ribosomal subunit. Contacts protein S5. The interaction surface between S4 and S5 is involved in control of translational fidelity.

Functionally, one of the primary rRNA binding proteins, it binds directly to 16S rRNA where it nucleates assembly of the body of the 30S subunit. In terms of biological role, with S5 and S12 plays an important role in translational accuracy. In Orientia tsutsugamushi (strain Boryong) (Rickettsia tsutsugamushi), this protein is Small ribosomal subunit protein uS4.